The sequence spans 62 residues: Small acidic protein 1 (62 aa).

As to quaternary structure, interacts with the COP9 signalosome. Expressed in roots, flowers, siliques, stems, leaves and seeds. In flowers, detected in petals, anthers and pistils.

Functionally, mediates responses to the synthetic auxin 2,4-dichlorophenoxyacetic acid (2,4-D). Not involved in the response to indole-3-acetic acid (IAA). Interacts with RUB modification-related components and may regulate the cullin-ring ubiquitin E3 ligase complex (CRL) activity. The polypeptide is Small acidic protein 1 (SMAP1) (Arabidopsis thaliana (Mouse-ear cress)).